Reading from the N-terminus, the 1206-residue chain is Methionine synthase (1206 aa).

The 314-residue stretch at 1 to 314 (MRVTAANQHQ…DHIREVAAAV (314 aa)) folds into the Hcy-binding domain. Residues C233, C299, and C300 each coordinate Zn(2+). Residues 350-609 (VLMIGERTNA…IPEEQRQAAL (260 aa)) form the Pterin-binding domain. Residues 642-735 (REAELAKLPL…HMEKSDCDFG (94 aa)) form the B12-binding N-terminal domain. In terms of domain architecture, B12-binding spans 740–877 (KGRIVLATVK…SAKRGEALAP (138 aa)). Methylcob(III)alamin is bound by residues 750 to 754 (GDVHD), H753, S798, and A856. The segment at 873–925 (EALAPGSPESLAAEADRNKETERKARHERSKRIAVQRKAAEEPVEVPERSDVP) is disordered. Positions 886–897 (EADRNKETERKA) are enriched in basic and acidic residues. Basic residues predominate over residues 898–907 (RHERSKRIAV). The 300-residue stretch at 907 to 1206 (VQRKAAEEPV…HHPAAKYFNV (300 aa)) folds into the AdoMet activation domain. The span at 910–924 (KAAEEPVEVPERSDV) shows a compositional bias: basic and acidic residues. Residues D954, R1149, and 1203–1204 (YF) contribute to the S-adenosyl-L-methionine site.

This sequence belongs to the vitamin-B12 dependent methionine synthase family. Methylcob(III)alamin serves as cofactor. Zn(2+) is required as a cofactor.

It carries out the reaction (6S)-5-methyl-5,6,7,8-tetrahydrofolate + L-homocysteine = (6S)-5,6,7,8-tetrahydrofolate + L-methionine. It participates in amino-acid biosynthesis; L-methionine biosynthesis via de novo pathway; L-methionine from L-homocysteine (MetH route): step 1/1. Functionally, catalyzes the transfer of a methyl group from methyl-cobalamin to homocysteine, yielding enzyme-bound cob(I)alamin and methionine. Subsequently, remethylates the cofactor using methyltetrahydrofolate. This Mycobacterium leprae (strain TN) protein is Methionine synthase (metH).